The primary structure comprises 381 residues: 3-dehydroquinate synthase (381 aa).

Residues 81–86 (EGESSK), 115–119 (GVIGD), 139–140 (TS), Lys152, and Lys161 each bind NAD(+). Residues Glu194, His256, and His274 each contribute to the Zn(2+) site.

Belongs to the sugar phosphate cyclases superfamily. Dehydroquinate synthase family. The cofactor is Co(2+). Requires Zn(2+) as cofactor. NAD(+) serves as cofactor.

The protein localises to the cytoplasm. The enzyme catalyses 7-phospho-2-dehydro-3-deoxy-D-arabino-heptonate = 3-dehydroquinate + phosphate. The protein operates within metabolic intermediate biosynthesis; chorismate biosynthesis; chorismate from D-erythrose 4-phosphate and phosphoenolpyruvate: step 2/7. Functionally, catalyzes the conversion of 3-deoxy-D-arabino-heptulosonate 7-phosphate (DAHP) to dehydroquinate (DHQ). This chain is 3-dehydroquinate synthase, found in Rhodopseudomonas palustris (strain ATCC BAA-98 / CGA009).